We begin with the raw amino-acid sequence, 145 residues long: MAKNILLLNGPNLNLLGSREPEVYGATTLADVERAASEQVAQAGAKLTTFQSNHEGALIDRIQAAKKEGIDAIVINPGGLTHTSVSLRDALAAVAIPFVEIHVSNIHQREAFRHHSYLSGIAVGVICGLGTEGYAAAISFALKKL.

The Proton acceptor role is filled by Tyr24. Substrate-binding residues include Asn76, His82, and Asp89. His102 (proton donor) is an active-site residue. Substrate-binding positions include 103–104 and Arg113; that span reads VS.

Belongs to the type-II 3-dehydroquinase family. As to quaternary structure, homododecamer.

The catalysed reaction is 3-dehydroquinate = 3-dehydroshikimate + H2O. It participates in metabolic intermediate biosynthesis; chorismate biosynthesis; chorismate from D-erythrose 4-phosphate and phosphoenolpyruvate: step 3/7. Functionally, catalyzes a trans-dehydration via an enolate intermediate. In Janthinobacterium sp. (strain Marseille) (Minibacterium massiliensis), this protein is 3-dehydroquinate dehydratase.